The sequence spans 577 residues: Arginine--tRNA ligase (577 aa).

Positions 122 to 132 (PNVAKEMHVGH) match the 'HIGH' region motif.

Belongs to the class-I aminoacyl-tRNA synthetase family. Monomer.

Its subcellular location is the cytoplasm. The enzyme catalyses tRNA(Arg) + L-arginine + ATP = L-arginyl-tRNA(Arg) + AMP + diphosphate. The polypeptide is Arginine--tRNA ligase (Escherichia coli O9:H4 (strain HS)).